Consider the following 294-residue polypeptide: Protoheme IX farnesyltransferase (294 aa).

The next 9 membrane-spanning stretches (helical) occupy residues 25 to 45, 48 to 68, 92 to 112, 115 to 135, 141 to 161, 170 to 190, 216 to 236, 240 to 260, and 272 to 292; these read SLVLVTAAGGMWLAPGHMGAV, LVTLLATAGTVGAANALNCYW, AVALWFGISLAAVSLPALALG, VLTAALGLVALLSYVLAYTPL, AAMLVGGVPGALPPLMGWTAV, FSLFAIMFLWQMPHFIAIALF, VVLYLVALIPMTLLPFQLHIA, YLAAAVLLGLSFLGLGAWGFF, and FFFSLIYLTGLFAALALDRVP.

Belongs to the UbiA prenyltransferase family. Protoheme IX farnesyltransferase subfamily.

It is found in the cell inner membrane. The catalysed reaction is heme b + (2E,6E)-farnesyl diphosphate + H2O = Fe(II)-heme o + diphosphate. The protein operates within porphyrin-containing compound metabolism; heme O biosynthesis; heme O from protoheme: step 1/1. Converts heme B (protoheme IX) to heme O by substitution of the vinyl group on carbon 2 of heme B porphyrin ring with a hydroxyethyl farnesyl side group. The polypeptide is Protoheme IX farnesyltransferase (Myxococcus xanthus (strain DK1622)).